The following is a 667-amino-acid chain: Protein OS-9 (667 aa).

Residues Met1 to Thr25 form the signal peptide. The region spanning Ala108 to His230 is the MRH domain. Cys110 and Cys123 are joined by a disulfide. Trp117, Trp118, and Gln130 together coordinate a mannooligosaccharide derivative. Asn177 is a glycosylation site (N-linked (GlcNAc...) asparagine). Disulfide bonds link Cys181–Cys216 and Cys196–Cys228. Asp182, Arg188, Glu212, and Tyr218 together coordinate a mannooligosaccharide derivative. Disordered stretches follow at residues Gln262–Glu450, Glu506–Val541, and Glu636–Phe667. Composition is skewed to basic and acidic residues over residues Ala263–Pro279, Glu304–Thr328, and Pro396–Pro408. Acidic residues predominate over residues Gln410–Glu429. The span at Arg430–Glu450 shows a compositional bias: basic and acidic residues. Positions Lys514–Pro523 are enriched in basic residues. A compositionally biased stretch (basic and acidic residues) spans Glu636–Tyr647.

The protein belongs to the OS-9 family. Component of the HRD1 complex, which comprises at least SYNV1/HRD1, DERL1/2, FAM8A1, HERPUD1/HERP, OS9, SEL1L and UBE2J1. FAM8A1 is stabilized by interaction with SYNV1, which prevents its proteasomal degradation. OS9 and UBE2J1 recruitment to the complex may be mediated by SEL1L. Through this complex, may interact with ERLEC1 and HSPA5. Interacts (via C-terminus) with CPNE6 (via second C2 domain); this interaction occurs in a calcium-dependent manner in vitro. Interacts with CREB3. Post-translationally, intramolecular disulfide bonds.

It localises to the endoplasmic reticulum lumen. Lectin component of the HRD1 complex, which functions in endoplasmic reticulum (ER) quality control and ER-associated degradation (ERAD). Specifically recognizes and binds improperly folded glycoproteins as well as hyperglycosylated proteins, retain them in the ER, and transfers them to the ubiquitination machinery and promote their degradation. Possible targets include TRPV4 as well as hyperglycosylated HSP90B1. The sequence is that of Protein OS-9 (OS9) from Bos taurus (Bovine).